A 209-amino-acid chain; its full sequence is Small ribosomal subunit protein uS5 (209 aa).

Residues 48–111 (LEDEVLDINM…DAAKLNITYI (64 aa)) enclose the S5 DRBM domain.

Belongs to the universal ribosomal protein uS5 family. In terms of assembly, part of the 30S ribosomal subunit. Contacts protein S4.

With S4 and S12 plays an important role in translational accuracy. This is Small ribosomal subunit protein uS5 from Methanosarcina acetivorans (strain ATCC 35395 / DSM 2834 / JCM 12185 / C2A).